A 280-amino-acid polypeptide reads, in one-letter code: uncharacterized protein (280 aa).

Disordered regions lie at residues 20–41 (DVKK…QQQQ), 170–199 (INSP…KDKA), and 251–280 (GNSK…SFSF). Positions 25–41 (QQQQQQQPQAPPQQQQQ) are enriched in low complexity. Basic and acidic residues predominate over residues 178-199 (EEEKPQLSKKEEPEWLKGKDKA).

This is an uncharacterized protein from Dictyostelium discoideum (Social amoeba).